The chain runs to 950 residues: General transcription factor II-I repeat domain-containing protein 2 (950 aa).

2 GTF2I-like repeats span residues 100 to 194 and 324 to 418; these read QVDS…QPGG and LSSL…SNVG.

The protein belongs to the TFII-I family.

The protein localises to the nucleus. The polypeptide is General transcription factor II-I repeat domain-containing protein 2 (GTF2IRD2) (Bos taurus (Bovine)).